The following is a 669-amino-acid chain: Protein ENTREP3 (669 aa).

Helical transmembrane passes span 34 to 54 (LLTL…FSMV), 67 to 87 (SCPS…IVSW), and 91 to 111 (FTLV…LSMA). The N-linked (GlcNAc...) asparagine glycan is linked to Asn-160. A helical transmembrane segment spans residues 174–194 (LFSVCGLTICAAIICTLSAIV). 2 positions are modified to phosphoserine: Ser-359 and Ser-390. 3 disordered regions span residues 387-420 (FEDS…PTAA), 445-502 (PRGG…TTSS), and 550-571 (RSAE…SGPT). Over residues 399-408 (AARSYSCSAP) the composition is skewed to low complexity. Ser-494 is subject to Phosphoserine. The residue at position 575 (Ser-575) is a Phosphoserine. A disordered region spans residues 597-624 (RRSPDPTGTGAHGYKQVRRSPWGRPGRE).

It belongs to the ENTREP family. In terms of assembly, may interact with WWOX.

It is found in the membrane. The chain is Protein ENTREP3 from Mus musculus (Mouse).